The sequence spans 193 residues: ATP-dependent Clp protease proteolytic subunit (193 aa).

The active-site Nucleophile is Ser-98. Residue His-123 is part of the active site.

The protein belongs to the peptidase S14 family. Fourteen ClpP subunits assemble into 2 heptameric rings which stack back to back to give a disk-like structure with a central cavity, resembling the structure of eukaryotic proteasomes.

The protein localises to the cytoplasm. The enzyme catalyses Hydrolysis of proteins to small peptides in the presence of ATP and magnesium. alpha-casein is the usual test substrate. In the absence of ATP, only oligopeptides shorter than five residues are hydrolyzed (such as succinyl-Leu-Tyr-|-NHMec, and Leu-Tyr-Leu-|-Tyr-Trp, in which cleavage of the -Tyr-|-Leu- and -Tyr-|-Trp bonds also occurs).. Its function is as follows. Cleaves peptides in various proteins in a process that requires ATP hydrolysis. Has a chymotrypsin-like activity. Plays a major role in the degradation of misfolded proteins. This Haemophilus influenzae (strain 86-028NP) protein is ATP-dependent Clp protease proteolytic subunit.